Here is a 272-residue protein sequence, read N- to C-terminus: Shikimate dehydrogenase (NADP(+)) (272 aa).

Residues 14–16 and Thr-61 each bind shikimate; that span reads SKS. Lys-65 acts as the Proton acceptor in catalysis. The shikimate site is built by Asn-86 and Asp-102. NADP(+) contacts are provided by residues 126 to 130, 149 to 154, Ser-189, and Met-213; these read GAGGA and NRTFSK. Tyr-215 is a binding site for shikimate. Gly-238 serves as a coordination point for NADP(+).

This sequence belongs to the shikimate dehydrogenase family. In terms of assembly, homodimer.

The enzyme catalyses shikimate + NADP(+) = 3-dehydroshikimate + NADPH + H(+). It functions in the pathway metabolic intermediate biosynthesis; chorismate biosynthesis; chorismate from D-erythrose 4-phosphate and phosphoenolpyruvate: step 4/7. Functionally, involved in the biosynthesis of the chorismate, which leads to the biosynthesis of aromatic amino acids. Catalyzes the reversible NADPH linked reduction of 3-dehydroshikimate (DHSA) to yield shikimate (SA). This is Shikimate dehydrogenase (NADP(+)) from Haemophilus influenzae (strain ATCC 51907 / DSM 11121 / KW20 / Rd).